The chain runs to 436 residues: Protein arginine methyltransferase NDUFAF7, mitochondrial (436 aa).

A mitochondrion-targeting transit peptide spans 1 to 41 (MNALVRRCVARAGLPCIWRGKCYSSGNEPAESNQVTPMLRH). A disordered region spans residues 411 to 436 (GSQERNACQSKTPSSSVAGFDELVWQ). The span at 413–427 (QERNACQSKTPSSSV) shows a compositional bias: polar residues.

The protein belongs to the NDUFAF7 family. As to quaternary structure, interacts with NDUFS2.

It is found in the mitochondrion. The catalysed reaction is L-arginyl-[protein] + 2 S-adenosyl-L-methionine = N(omega),N(omega)'-dimethyl-L-arginyl-[protein] + 2 S-adenosyl-L-homocysteine + 2 H(+). Its function is as follows. Arginine methyltransferase involved in the assembly or stability of mitochondrial NADH:ubiquinone oxidoreductase complex (complex I). Acts by mediating symmetric dimethylation of 'Arg-118' of NDUFS2 after it assembles into the complex I, stabilizing the early intermediate complex. This chain is Protein arginine methyltransferase NDUFAF7, mitochondrial, found in Mus musculus (Mouse).